The chain runs to 90 residues: Probable Fe(2+)-trafficking protein (90 aa).

It belongs to the Fe(2+)-trafficking protein family.

Its function is as follows. Could be a mediator in iron transactions between iron acquisition and iron-requiring processes, such as synthesis and/or repair of Fe-S clusters in biosynthetic enzymes. This chain is Probable Fe(2+)-trafficking protein, found in Thioalkalivibrio sulfidiphilus (strain HL-EbGR7).